We begin with the raw amino-acid sequence, 416 residues long: Putative L-glutamine:3-amino-2,3-dideoxy-scyllo-inosose aminotransferase (416 aa).

Lys199 carries the N6-(pyridoxal phosphate)lysine modification.

It belongs to the DegT/DnrJ/EryC1 family. L-glutamine:2-deoxy-scyllo-inosose/scyllo-inosose aminotransferase subfamily. Requires pyridoxal 5'-phosphate as cofactor.

The enzyme catalyses 3-amino-2,3-dideoxy-scyllo-inosose + L-glutamine = 2-deoxystreptamine + 2-oxoglutaramate. Its pathway is metabolic intermediate biosynthesis; 2-deoxystreptamine biosynthesis; 2-deoxystreptamine from D-glucose 6-phosphate: step 4/4. It functions in the pathway antibiotic biosynthesis; tobramycin biosynthesis. In terms of biological role, catalyzes the transamination of 3-amino-2,3-dideoxy-scyllo-inosose (amino-DOI) into 2-deoxystreptamine (DOS). The sequence is that of Putative L-glutamine:3-amino-2,3-dideoxy-scyllo-inosose aminotransferase (tobS2) from Streptoalloteichus tenebrarius (strain ATCC 17920 / DSM 40477 / JCM 4838 / CBS 697.72 / NBRC 16177 / NCIMB 11028 / NRRL B-12390 / A12253. 1 / ISP 5477) (Streptomyces tenebrarius).